Reading from the N-terminus, the 261-residue chain is MSIQDKPFTIAGVTFSSRLILGTGKYPSHDIMKRCHESSGTEMVTVAVRRLDLKATGEASLMNWIDRNRLRLLPNTALCYTADDAVRTCRLAEELGMSKWVKLEVLGDEKTLYPDVEETVKAARILVKEGFTVLPYTSDDPITARKLEDAGCAAVMPLAAPIGSGLGIRNPHNIRLILETVKVPVIVDAGVGTASDAAIAMELGVEAVLMNTAIAGAQDPVRMAVAMKKAVEAGRDAYLAGRIPRKAYGSASSPIDGLVHH.

Residue lysine 102 is the Schiff-base intermediate with DXP of the active site. 1-deoxy-D-xylulose 5-phosphate is bound by residues glycine 163, 189-190 (AG), and 211-212 (NT).

The protein belongs to the ThiG family. As to quaternary structure, homotetramer. Forms heterodimers with either ThiH or ThiS.

The protein localises to the cytoplasm. The catalysed reaction is [ThiS sulfur-carrier protein]-C-terminal-Gly-aminoethanethioate + 2-iminoacetate + 1-deoxy-D-xylulose 5-phosphate = [ThiS sulfur-carrier protein]-C-terminal Gly-Gly + 2-[(2R,5Z)-2-carboxy-4-methylthiazol-5(2H)-ylidene]ethyl phosphate + 2 H2O + H(+). Its pathway is cofactor biosynthesis; thiamine diphosphate biosynthesis. Functionally, catalyzes the rearrangement of 1-deoxy-D-xylulose 5-phosphate (DXP) to produce the thiazole phosphate moiety of thiamine. Sulfur is provided by the thiocarboxylate moiety of the carrier protein ThiS. In vitro, sulfur can be provided by H(2)S. This Myxococcus xanthus (strain DK1622) protein is Thiazole synthase.